Reading from the N-terminus, the 210-residue chain is Guanylate kinase (210 aa).

A Guanylate kinase-like domain is found at 6-184; it reads GNIYIVVAPS…ARLDLISIVR (179 aa). 13–20 is an ATP binding site; it reads APSGAGKT.

Belongs to the guanylate kinase family.

It localises to the cytoplasm. It carries out the reaction GMP + ATP = GDP + ADP. In terms of biological role, essential for recycling GMP and indirectly, cGMP. The chain is Guanylate kinase from Chromobacterium violaceum (strain ATCC 12472 / DSM 30191 / JCM 1249 / CCUG 213 / NBRC 12614 / NCIMB 9131 / NCTC 9757 / MK).